Here is a 236-residue protein sequence, read N- to C-terminus: 7-cyano-7-deazaguanine synthase (236 aa).

12–22 serves as a coordination point for ATP; the sequence is FSGGQDSTTCL. Zn(2+) contacts are provided by Cys200, Cys215, Cys218, and Cys221.

This sequence belongs to the QueC family. It depends on Zn(2+) as a cofactor.

The catalysed reaction is 7-carboxy-7-deazaguanine + NH4(+) + ATP = 7-cyano-7-deazaguanine + ADP + phosphate + H2O + H(+). The protein operates within purine metabolism; 7-cyano-7-deazaguanine biosynthesis. Its function is as follows. Catalyzes the ATP-dependent conversion of 7-carboxy-7-deazaguanine (CDG) to 7-cyano-7-deazaguanine (preQ(0)). In Bradyrhizobium sp. (strain ORS 278), this protein is 7-cyano-7-deazaguanine synthase.